Here is a 334-residue protein sequence, read N- to C-terminus: 6-phosphogluconolactonase (334 aa).

This sequence belongs to the cycloisomerase 2 family.

The catalysed reaction is 6-phospho-D-glucono-1,5-lactone + H2O = 6-phospho-D-gluconate + H(+). It functions in the pathway carbohydrate degradation; pentose phosphate pathway; D-ribulose 5-phosphate from D-glucose 6-phosphate (oxidative stage): step 2/3. Functionally, catalyzes the hydrolysis of 6-phosphogluconolactone to 6-phosphogluconate. The polypeptide is 6-phosphogluconolactonase (Yersinia pseudotuberculosis serotype IB (strain PB1/+)).